Here is a 67-residue protein sequence, read N- to C-terminus: Large ribosomal subunit protein uL29 (67 aa).

It belongs to the universal ribosomal protein uL29 family.

This Rhizorhabdus wittichii (strain DSM 6014 / CCUG 31198 / JCM 15750 / NBRC 105917 / EY 4224 / RW1) (Sphingomonas wittichii) protein is Large ribosomal subunit protein uL29.